We begin with the raw amino-acid sequence, 232 residues long: MHPVDKKSLALKIYEATGYQFRDLDLLLEALTHPSLSYKSAANYERLEFLGDAVLSMTVSEMLYRLFPDDDEGCLTRKRTALVRGSEVVEIARSIGLGELILMSGGERTCGGSDNPGTLENALEALIGAMYMDGGPEAYRSFIHKHWLARAQHMSYTPPQDPKTALQEWVQGRGWAMPLYKLVSKSGPEHKPVFAVEVSIQEHGNVLGTGSSKKLAEQEAAKLMLKKITELP.

The region spanning 10–135 (ALKIYEATGY…LIGAMYMDGG (126 aa)) is the RNase III domain. Residue Glu48 coordinates Mg(2+). Residue Asp52 is part of the active site. Mg(2+) is bound by residues Asn121 and Glu124. The active site involves Glu124. One can recognise a DRBM domain in the interval 161 to 230 (DPKTALQEWV…AKLMLKKITE (70 aa)).

It belongs to the ribonuclease III family. As to quaternary structure, homodimer. Requires Mg(2+) as cofactor.

The protein localises to the cytoplasm. It catalyses the reaction Endonucleolytic cleavage to 5'-phosphomonoester.. Functionally, digests double-stranded RNA. Involved in the processing of primary rRNA transcript to yield the immediate precursors to the large and small rRNAs (23S and 16S). Processes some mRNAs, and tRNAs when they are encoded in the rRNA operon. Processes pre-crRNA and tracrRNA of type II CRISPR loci if present in the organism. This is Ribonuclease 3 from Anaplasma marginale (strain Florida).